We begin with the raw amino-acid sequence, 273 residues long: Diaminopimelate epimerase (273 aa).

Positions 11 and 60 each coordinate substrate. The active-site Proton donor is the C69. Substrate contacts are provided by residues 70–71 (GN), N181, and 199–200 (ER). C209 (proton acceptor) is an active-site residue. 210 to 211 (GT) contacts substrate.

It belongs to the diaminopimelate epimerase family. As to quaternary structure, homodimer.

The protein resides in the cytoplasm. It carries out the reaction (2S,6S)-2,6-diaminopimelate = meso-2,6-diaminopimelate. It functions in the pathway amino-acid biosynthesis; L-lysine biosynthesis via DAP pathway; DL-2,6-diaminopimelate from LL-2,6-diaminopimelate: step 1/1. Functionally, catalyzes the stereoinversion of LL-2,6-diaminopimelate (L,L-DAP) to meso-diaminopimelate (meso-DAP), a precursor of L-lysine and an essential component of the bacterial peptidoglycan. The protein is Diaminopimelate epimerase of Helicobacter pylori (strain Shi470).